Here is a 117-residue protein sequence, read N- to C-terminus: Holo-[acyl-carrier-protein] synthase (117 aa).

Aspartate 8 and glutamate 58 together coordinate Mg(2+).

It belongs to the P-Pant transferase superfamily. AcpS family. Mg(2+) is required as a cofactor.

The protein resides in the cytoplasm. It carries out the reaction apo-[ACP] + CoA = holo-[ACP] + adenosine 3',5'-bisphosphate + H(+). In terms of biological role, transfers the 4'-phosphopantetheine moiety from coenzyme A to a Ser of acyl-carrier-protein. The protein is Holo-[acyl-carrier-protein] synthase of Enterococcus faecalis (strain ATCC 700802 / V583).